A 268-amino-acid polypeptide reads, in one-letter code: 4-hydroxy-tetrahydrodipicolinate reductase (268 aa).

NAD(+) contacts are provided by residues 10–15 (GSTGRM), E36, 99–101 (GTT), and 123–126 (APNM). Residue H156 is the Proton donor/acceptor of the active site. H157 contacts (S)-2,3,4,5-tetrahydrodipicolinate. K160 serves as the catalytic Proton donor. 166–167 (GT) contributes to the (S)-2,3,4,5-tetrahydrodipicolinate binding site.

This sequence belongs to the DapB family.

It is found in the cytoplasm. The catalysed reaction is (S)-2,3,4,5-tetrahydrodipicolinate + NAD(+) + H2O = (2S,4S)-4-hydroxy-2,3,4,5-tetrahydrodipicolinate + NADH + H(+). It carries out the reaction (S)-2,3,4,5-tetrahydrodipicolinate + NADP(+) + H2O = (2S,4S)-4-hydroxy-2,3,4,5-tetrahydrodipicolinate + NADPH + H(+). Its pathway is amino-acid biosynthesis; L-lysine biosynthesis via DAP pathway; (S)-tetrahydrodipicolinate from L-aspartate: step 4/4. Functionally, catalyzes the conversion of 4-hydroxy-tetrahydrodipicolinate (HTPA) to tetrahydrodipicolinate. This is 4-hydroxy-tetrahydrodipicolinate reductase from Nitrosomonas eutropha (strain DSM 101675 / C91 / Nm57).